Reading from the N-terminus, the 617-residue chain is Urocanate reductase (617 aa).

The residue at position 70 (Thr70) is an FMN phosphoryl threonine. 7 residues coordinate FAD: Ala124, Glu143, Asn151, Thr152, Gly156, Gly157, and Asp387. The Proton donor role is filled by Arg446. Residues His553, Glu582, and Leu598 each contribute to the FAD site.

Belongs to the FAD-dependent oxidoreductase 2 family. FRD/SDH subfamily. Requires FAD as cofactor. FMN serves as cofactor.

The enzyme catalyses dihydrourocanate + A = urocanate + AH2. In terms of biological role, catalyzes the two-electron reduction of urocanate to dihydrourocanate (also named imidazole propionate or deamino-histidine). Dihydrourocanate is present at higher concentrations in subjects with type 2 diabetes, and directly impairs glucose tolerance and insulin signaling at the level of insulin receptor substrate (IRS) through activation of p38 gamma (MAPK12)-p62-mTORC1. Therefore, the UrdA enzyme from the gut bacteria L.fermentum strain NBRC 3956 may contribute to the pathogenesis of type 2 diabetes by producing the microbial metabolite dihydrourocanate. This chain is Urocanate reductase, found in Limosilactobacillus fermentum (strain NBRC 3956 / LMG 18251) (Lactobacillus fermentum).